Consider the following 614-residue polypeptide: Putative N(6)-adenosine-methyltransferase MT-A70-like (614 aa).

The interval 59–78 (TPPLTNFNPPKSSSLQQLPQ) is disordered. Residues 67–78 (PPKSSSLQQLPQ) show a composition bias toward low complexity. Residues 391–392 (DI) and Asp-409 contribute to the S-adenosyl-L-methionine site. The interval 479–492 (RIIRTGRTGHWLNH) is positively charged region required for RNA-binding. Residues Lys-526, 549-552 (RMHN), and 562-563 (NQ) each bind S-adenosyl-L-methionine. The disordered stretch occupies residues 589–614 (PASPSRASAMELDSSVAAQTTTSAMM). Residues 604 to 614 (VAAQTTTSAMM) are compositionally biased toward polar residues.

The protein belongs to the MT-A70-like family.

Its subcellular location is the nucleus. The catalysed reaction is an adenosine in mRNA + S-adenosyl-L-methionine = an N(6)-methyladenosine in mRNA + S-adenosyl-L-homocysteine + H(+). Functionally, putative N6-methyltransferase that methylates adenosine residues of some mRNAs. N6-methyladenosine (m6A), which is present at internal sites of some mRNAs, may play a role in the efficiency of mRNA splicing, transport or translation. The protein is Putative N(6)-adenosine-methyltransferase MT-A70-like of Medicago truncatula (Barrel medic).